Consider the following 1597-residue polypeptide: Pentafunctional AROM polypeptide (1597 aa).

The segment at 1-384 (MGVPTKISIL…HEPRASTVSN (384 aa)) is 3-dehydroquinate synthase. Residues 44 to 46 (DTN), 81 to 84 (ESSK), 114 to 116 (GGV), and Asp119 each bind NAD(+). Arg130 provides a ligand contact to 7-phospho-2-dehydro-3-deoxy-D-arabino-heptonate. 139-140 (TT) serves as a coordination point for NAD(+). The 7-phospho-2-dehydro-3-deoxy-D-arabino-heptonate site is built by Asp146 and Lys152. Lys161 contributes to the NAD(+) binding site. 7-phospho-2-dehydro-3-deoxy-D-arabino-heptonate is bound at residue Asn162. Residues 179-182 (FLNT) and Asn190 contribute to the NAD(+) site. Glu194 is a Zn(2+) binding site. 7-phospho-2-dehydro-3-deoxy-D-arabino-heptonate-binding positions include 194–197 (EVIK) and Lys250. The Proton acceptor; for 3-dehydroquinate synthase activity role is filled by Glu260. 7-phospho-2-dehydro-3-deoxy-D-arabino-heptonate is bound by residues 264–268 (RNLLN) and His271. His271 contacts Zn(2+). The active-site Proton acceptor; for 3-dehydroquinate synthase activity is the His275. Residues His287 and Lys356 each coordinate 7-phospho-2-dehydro-3-deoxy-D-arabino-heptonate. His287 lines the Zn(2+) pocket. The EPSP synthase stretch occupies residues 397–842 (VSPGVPKNLN…WDSLAQTFKV (446 aa)). Catalysis depends on Cys824, which acts as the For EPSP synthase activity. The segment at 866–1057 (ASIFIIGMRG…RSKENTFFVS (192 aa)) is shikimate kinase. 872–879 (GMRGAGKT) provides a ligand contact to ATP. The tract at residues 1058 to 1278 (LTLPDLAPAA…AAPGQLSARE (221 aa)) is 3-dehydroquinase. Residue His1181 is the Proton acceptor; for 3-dehydroquinate dehydratase activity of the active site. The Schiff-base intermediate with substrate; for 3-dehydroquinate dehydratase activity role is filled by Lys1209. The interval 1291–1597 (SKKFAVIGNP…VQPKDDDIST (307 aa)) is shikimate dehydrogenase.

In the N-terminal section; belongs to the sugar phosphate cyclases superfamily. Dehydroquinate synthase family. It in the 2nd section; belongs to the EPSP synthase family. The protein in the 3rd section; belongs to the shikimate kinase family. This sequence in the 4th section; belongs to the type-I 3-dehydroquinase family. In the C-terminal section; belongs to the shikimate dehydrogenase family. As to quaternary structure, homodimer. It depends on Zn(2+) as a cofactor.

The protein localises to the cytoplasm. It catalyses the reaction 7-phospho-2-dehydro-3-deoxy-D-arabino-heptonate = 3-dehydroquinate + phosphate. It carries out the reaction 3-dehydroquinate = 3-dehydroshikimate + H2O. The catalysed reaction is shikimate + NADP(+) = 3-dehydroshikimate + NADPH + H(+). The enzyme catalyses shikimate + ATP = 3-phosphoshikimate + ADP + H(+). It catalyses the reaction 3-phosphoshikimate + phosphoenolpyruvate = 5-O-(1-carboxyvinyl)-3-phosphoshikimate + phosphate. It participates in metabolic intermediate biosynthesis; chorismate biosynthesis; chorismate from D-erythrose 4-phosphate and phosphoenolpyruvate: step 2/7. It functions in the pathway metabolic intermediate biosynthesis; chorismate biosynthesis; chorismate from D-erythrose 4-phosphate and phosphoenolpyruvate: step 3/7. Its pathway is metabolic intermediate biosynthesis; chorismate biosynthesis; chorismate from D-erythrose 4-phosphate and phosphoenolpyruvate: step 4/7. The protein operates within metabolic intermediate biosynthesis; chorismate biosynthesis; chorismate from D-erythrose 4-phosphate and phosphoenolpyruvate: step 5/7. It participates in metabolic intermediate biosynthesis; chorismate biosynthesis; chorismate from D-erythrose 4-phosphate and phosphoenolpyruvate: step 6/7. In terms of biological role, the AROM polypeptide catalyzes 5 consecutive enzymatic reactions in prechorismate polyaromatic amino acid biosynthesis. This is Pentafunctional AROM polypeptide from Ajellomyces dermatitidis (strain ER-3 / ATCC MYA-2586) (Blastomyces dermatitidis).